Reading from the N-terminus, the 178-residue chain is Inorganic pyrophosphatase (178 aa).

The substrate site is built by Lys-30, Arg-44, and Tyr-56. The Mg(2+) site is built by Asp-66, Asp-71, and Asp-103. Tyr-140 lines the substrate pocket.

It belongs to the PPase family. Homohexamer. The cofactor is Mg(2+).

It localises to the cytoplasm. The enzyme catalyses diphosphate + H2O = 2 phosphate + H(+). Catalyzes the hydrolysis of inorganic pyrophosphate (PPi) forming two phosphate ions. The protein is Inorganic pyrophosphatase of Pyrococcus furiosus (strain ATCC 43587 / DSM 3638 / JCM 8422 / Vc1).